We begin with the raw amino-acid sequence, 509 residues long: Proto-oncogene tyrosine-protein kinase LCK (509 aa).

The N-myristoyl glycine moiety is linked to residue Gly2. The interactions with CD4 and CD8 stretch occupies residues 2–72 (GCVCSSNPED…DNLVIALHSY (71 aa)). Residues Cys3 and Cys5 are each lipidated (S-palmitoyl cysteine). In terms of domain architecture, SH3 spans 61-121 (LQDNLVIALH…PFNFVAKANS (61 aa)). A Glycyl lysine isopeptide (Lys-Gly) (interchain with G-Cter in ubiquitin) cross-link involves residue Lys99. Phosphoserine is present on Ser102. Positions 127-224 (WFFKNLSRKD…GLCTKLSRPC (98 aa)) constitute an SH2 domain. The segment at 154–242 (RESESTAGSF…WWEDEWEVPR (89 aa)) is interaction with PTPRH. Phosphothreonine is present on Thr159. Ser162 bears the Phosphoserine mark. Residue Tyr192 is modified to Phosphotyrosine. The residue at position 194 (Ser194) is a Phosphoserine. Positions 245–498 (LKLVERLGAG…YLRSVLDDFF (254 aa)) constitute a Protein kinase domain. Residues 251 to 259 (LGAGQFGEV) and Lys273 contribute to the ATP site. Lys276 participates in a covalent cross-link: Glycyl lysine isopeptide (Lys-Gly) (interchain with G-Cter in ubiquitin). Residue Asp364 is the Proton acceptor of the active site. Position 394 is a phosphotyrosine; by autocatalysis (Tyr394). Tyr505 carries the post-translational modification Phosphotyrosine.

This sequence belongs to the protein kinase superfamily. Tyr protein kinase family. SRC subfamily. As to quaternary structure, binds to the cytoplasmic domain of cell surface receptors, such as AXL, CD2, CD4, CD5, CD8, CD44, CD45 and CD122. Also binds to effector molecules, such as PI4K, VAV1, RASA1, FYB1 and to other protein kinases including CDK1, RAF1, ZAP70 and SYK. Binds to phosphatidylinositol 3'-kinase (PI3K) from T-lymphocytes through its SH3 domain and to the tyrosine phosphorylated form of KHDRBS1/p70 through its SH2 domain. Interacts with SQSTM1. Interacts with phosphorylated LIME1. Interacts with CBLB and PTPRH. Interacts with RUNX3. Forms a signaling complex with EPHA1, PTK2B and PI3-KINASE; upon activation by EFNA1 which may regulate T-lymphocytes migration. Associates with ZAP70 and RHOH; these interactions allow LCK-mediated RHOH and CD3 subunit phosphorylations in presence of a functional ZAP70. Interacts with CEACAM1 (via cytoplasmic domain); mediates CEACAM1 phosphorylation resulting in PTPN6 recruitment that dephosphorylates TCR stimulation-induced CD247 and ZAP70. Interacts with FYB2. Interacts with CD160. Interacts with CD48. Autophosphorylated on Tyr-394, increasing enzymatic activity, this site is dephosphorylated by PTN22. Phosphorylated on Tyr-505 by CSK, decreasing activity. Dephosphorylated by PTPRC/CD45. Dephosphorylation at Tyr-394 by PTPN2 negatively regulates T-cells differentiation. Dephosphorylation at Tyr-394 by DUSP22 negatively regulates T-cell receptor signaling. In terms of processing, myristoylation is required prior to palmitoylation. Post-translationally, palmitoylation regulates association with the plasma membrane and could be mediated by ZDHHC2. 'Lys-63'-linked ubiquitinated at Lys-99 and Lys-276 by UBR2; this modification is required for autophosphorylation at Tyr-394.

Its subcellular location is the cell membrane. The protein resides in the cytoplasm. The protein localises to the cytosol. It carries out the reaction L-tyrosyl-[protein] + ATP = O-phospho-L-tyrosyl-[protein] + ADP + H(+). The relative activities of the inhibitory tyrosine-protein kinase CSK and the activating tyrosine-protein phosphatase PTPRC/CD45 determine the level of LCK activity. These interactions allow rapid and efficient activation of LCK in response to TCR stimulation. Functionally, non-receptor tyrosine-protein kinase that plays an essential role in the selection and maturation of developing T-cells in the thymus and in the function of mature T-cells. Plays a key role in T-cell antigen receptor (TCR)-linked signal transduction pathways. Constitutively associated with the cytoplasmic portions of the CD4 and CD8 surface receptors. Association of the TCR with a peptide antigen-bound MHC complex facilitates the interaction of CD4 and CD8 with MHC class II and class I molecules, respectively, thereby recruiting the associated LCK protein to the vicinity of the TCR/CD3 complex. LCK then phosphorylates tyrosine residues within the immunoreceptor tyrosine-based activation motifs (ITAM) of the cytoplasmic tails of the TCR-gamma chains and CD3 subunits, initiating the TCR/CD3 signaling pathway. Once stimulated, the TCR recruits the tyrosine kinase ZAP70, that becomes phosphorylated and activated by LCK. Following this, a large number of signaling molecules are recruited, ultimately leading to lymphokine production. LCK also contributes to signaling by other receptor molecules. Associates directly with the cytoplasmic tail of CD2, which leads to hyperphosphorylation and activation of LCK. Also plays a role in the IL2 receptor-linked signaling pathway that controls the T-cell proliferative response. Binding of IL2 to its receptor results in increased activity of LCK. Is expressed at all stages of thymocyte development and is required for the regulation of maturation events that are governed by both pre-TCR and mature alpha beta TCR. Phosphorylates other substrates including RUNX3, PTK2B/PYK2, the microtubule-associated protein MAPT, RHOH or TYROBP. Interacts with UNC119; this interaction plays a crucial role in activation of LCK. This chain is Proto-oncogene tyrosine-protein kinase LCK (Lck), found in Rattus norvegicus (Rat).